A 207-amino-acid chain; its full sequence is uncharacterized protein (207 aa).

A helical membrane pass occupies residues 177–197 (LILAIGFIIGILLPTFFILLG).

The protein resides in the membrane. This is an uncharacterized protein from Haemophilus influenzae (strain ATCC 51907 / DSM 11121 / KW20 / Rd).